The primary structure comprises 328 residues: Tetraacyldisaccharide 4'-kinase (328 aa).

Residue 55–62 (TAGGNGKT) coordinates ATP.

The protein belongs to the LpxK family.

It catalyses the reaction a lipid A disaccharide + ATP = a lipid IVA + ADP + H(+). Its pathway is glycolipid biosynthesis; lipid IV(A) biosynthesis; lipid IV(A) from (3R)-3-hydroxytetradecanoyl-[acyl-carrier-protein] and UDP-N-acetyl-alpha-D-glucosamine: step 6/6. Functionally, transfers the gamma-phosphate of ATP to the 4'-position of a tetraacyldisaccharide 1-phosphate intermediate (termed DS-1-P) to form tetraacyldisaccharide 1,4'-bis-phosphate (lipid IVA). In Escherichia coli O139:H28 (strain E24377A / ETEC), this protein is Tetraacyldisaccharide 4'-kinase.